A 389-amino-acid polypeptide reads, in one-letter code: Phospholipid phosphatase-related protein type 2 (389 aa).

2 consecutive transmembrane segments (helical) span residues 14–34 and 66–86; these read IIPCFVFVEILLGELARAFFP and FLGVYSFGLFTTTIFANAGQV. An N-linked (GlcNAc...) asparagine glycan is attached at Asn102. 3 consecutive transmembrane segments (helical) span residues 147–167, 176–196, and 203–223; these read AALCAYAVTYTAMYVTLVFRV, SLCLALLCPAFLVGVVRVAEY, and VLAGFLTGAAIATFLVTCVVH. Phosphoserine occurs at positions 236 and 249. Disordered regions lie at residues 255-280 and 295-351; these read SVAQEPEGCRSHSTPARLTPSKPQNC and APAM…GRKL. The segment covering 265–278 has biased composition (polar residues); the sequence is SHSTPARLTPSKPQ. Residues 314-339 show a composition bias toward pro residues; the sequence is TPLPLPLPLPAPAPSQGPSPSSPGPG.

Belongs to the PA-phosphatase related phosphoesterase family.

The protein resides in the membrane. This Bos taurus (Bovine) protein is Phospholipid phosphatase-related protein type 2.